A 278-amino-acid polypeptide reads, in one-letter code: Pca operon regulatory protein (278 aa).

Positions 31 to 91 (VAGISKGMAI…SDGHYFYLTP (61 aa)) constitute an HTH iclR-type domain. Positions 53 to 72 (ITMAAEKTGMTRAAARRHLL) form a DNA-binding region, H-T-H motif. Positions 106 to 278 (LPKISQPLLN…ETARELRNIL (173 aa)) constitute an IclR-ED domain.

Its function is as follows. Activates transcription of the pca operon. The sequence is that of Pca operon regulatory protein (pcaU) from Acinetobacter baylyi (strain ATCC 33305 / BD413 / ADP1).